Here is an 89-residue protein sequence, read N- to C-terminus: Small ribosomal subunit protein bS20 (89 aa).

Positions Met-1 to Lys-27 are disordered. The segment covering Ala-7–Arg-18 has biased composition (basic and acidic residues).

Belongs to the bacterial ribosomal protein bS20 family.

Binds directly to 16S ribosomal RNA. The protein is Small ribosomal subunit protein bS20 of Buchnera aphidicola subsp. Schizaphis graminum (strain Sg).